The primary structure comprises 373 residues: D-alanine--D-alanine ligase (373 aa).

In terms of domain architecture, ATP-grasp spans 156-363 (KKLLAADGLP…YPTLLATMIE (208 aa)). 184-239 (CERLGLPVFVKPARGGSSIGVSRVSSWDQLPAAVARARRHDPKVIVEAAISGRELE) provides a ligand contact to ATP. The Mg(2+) site is built by aspartate 318, glutamate 330, and asparagine 332.

Belongs to the D-alanine--D-alanine ligase family. Requires Mg(2+) as cofactor. Mn(2+) is required as a cofactor.

It localises to the cytoplasm. It carries out the reaction 2 D-alanine + ATP = D-alanyl-D-alanine + ADP + phosphate + H(+). Its pathway is cell wall biogenesis; peptidoglycan biosynthesis. In terms of biological role, cell wall formation. This is D-alanine--D-alanine ligase from Mycobacterium bovis (strain BCG / Pasteur 1173P2).